A 454-amino-acid chain; its full sequence is N-lysine methyltransferase setd6 (454 aa).

In terms of domain architecture, SET spans 38–265; sequence PKVYISTEGT…AGQELFNTYG (228 aa).

The protein belongs to the class V-like SAM-binding methyltransferase superfamily. Histone-lysine methyltransferase family. SETD6 subfamily.

The protein resides in the nucleus. Protein-lysine N-methyltransferase. The polypeptide is N-lysine methyltransferase setd6 (setd6) (Xenopus tropicalis (Western clawed frog)).